A 173-amino-acid polypeptide reads, in one-letter code: ATP-dependent protease subunit HslV (173 aa).

Thr-2 is an active-site residue. Na(+) contacts are provided by Gly-157, Cys-160, and Thr-163.

It belongs to the peptidase T1B family. HslV subfamily. In terms of assembly, a double ring-shaped homohexamer of HslV is capped on each side by a ring-shaped HslU homohexamer. The assembly of the HslU/HslV complex is dependent on binding of ATP.

The protein resides in the cytoplasm. It carries out the reaction ATP-dependent cleavage of peptide bonds with broad specificity.. With respect to regulation, allosterically activated by HslU binding. In terms of biological role, protease subunit of a proteasome-like degradation complex believed to be a general protein degrading machinery. The protein is ATP-dependent protease subunit HslV of Nitrosomonas eutropha (strain DSM 101675 / C91 / Nm57).